The sequence spans 255 residues: DASH complex subunit SPC34 (255 aa).

The interval 53–81 is disordered; it reads LFSVPPPPPRQTTLTAEQQQQQKPSNRRQ. Polar residues predominate over residues 63-81; the sequence is QTTLTAEQQQQQKPSNRRQ. Residues 176-248 are a coiled coil; it reads LAYYEAKIAE…QARLRALDAD (73 aa).

The protein belongs to the DASH complex SPC34 family. In terms of assembly, component of the DASH complex consisting of ASK1, DAD1, DAD2, DAD3, DAD4, DAM1, DUO1, HSK3, SPC19 and SPC34, with a stoichiometry of one copy of each subunit per complex. Multiple DASH complexes oligomerize to form a ring that encircles spindle microtubules and organizes the rod-like NDC80 complexes of the outer kinetochore of the outer kinetochore. DASH complex oligomerization strengthens microtubule attachments. On cytoplasmic microtubules, DASH complexes appear to form patches instead of rings.

It localises to the nucleus. The protein localises to the cytoplasm. It is found in the cytoskeleton. The protein resides in the spindle. Its subcellular location is the chromosome. It localises to the centromere. The protein localises to the kinetochore. In terms of biological role, component of the DASH complex that connects microtubules with kinetochores and couples microtubule depolymerisation to chromosome movement; it is involved in retrieving kinetochores to the spindle poles before their re-orientation on the spindle in early mitosis and allows microtubule depolymerization to pull chromosomes apart and resist detachment during anaphase. Kinetochores, consisting of a centromere-associated inner segment and a microtubule-contacting outer segment, play a crucial role in chromosome segregation by mediating the physical connection between centromeric DNA and microtubules. Kinetochores also serve as an input point for the spindle assembly checkpoint, which delays anaphase until all chromosomes have bioriented on the mitotic spindle. The protein is DASH complex subunit SPC34 of Chaetomium thermophilum (strain DSM 1495 / CBS 144.50 / IMI 039719) (Thermochaetoides thermophila).